Consider the following 118-residue polypeptide: Large ribosomal subunit protein bL20 (118 aa).

The protein belongs to the bacterial ribosomal protein bL20 family.

Its function is as follows. Binds directly to 23S ribosomal RNA and is necessary for the in vitro assembly process of the 50S ribosomal subunit. It is not involved in the protein synthesizing functions of that subunit. The sequence is that of Large ribosomal subunit protein bL20 from Hahella chejuensis (strain KCTC 2396).